Consider the following 393-residue polypeptide: DNA-directed RNA polymerase subunit Rpo1C (393 aa).

Belongs to the RNA polymerase beta' chain family. As to quaternary structure, part of the RNA polymerase complex.

It localises to the cytoplasm. It catalyses the reaction RNA(n) + a ribonucleoside 5'-triphosphate = RNA(n+1) + diphosphate. Functionally, DNA-dependent RNA polymerase (RNAP) catalyzes the transcription of DNA into RNA using the four ribonucleoside triphosphates as substrates. Forms part of the jaw domain. This chain is DNA-directed RNA polymerase subunit Rpo1C, found in Halococcus morrhuae (Micrococcus morrhuae).